Reading from the N-terminus, the 61-residue chain is MDPNCSCVAGDSCTCAGSCKCKECKCTSCKKSCCSCCPVGCAKCAQGCICKGASDKCNCCA.

Position 1 is an N-acetylmethionine (Met1). The segment at Met1 to Cys29 is beta. Cys5, Cys7, Cys13, Cys15, Cys19, Cys21, Cys24, Cys26, Cys29, Cys33, Cys34, Cys36, Cys37, Cys41, Cys44, Cys48, Cys50, Cys57, Cys59, and Cys60 together coordinate a divalent metal cation. Residues Lys20–Lys25 are antigenic epitope. The interval Lys30 to Ala61 is alpha.

It belongs to the metallothionein superfamily. Type 1 family.

Its function is as follows. Metallothioneins have a high content of cysteine residues that bind various heavy metals; these proteins are transcriptionally regulated by both heavy metals and glucocorticoids. In Macaca fascicularis (Crab-eating macaque), this protein is Metallothionein-2 (MT2).